Consider the following 245-residue polypeptide: Zinc import ATP-binding protein ZnuC (245 aa).

The ABC transporter domain maps to 27-244; it reads LTADSLTLFY…AKFLSVFPNN (218 aa). 59–66 contributes to the ATP binding site; that stretch reads GPNGGGKT.

The protein belongs to the ABC transporter superfamily. Zinc importer (TC 3.A.1.15.5) family. The complex is composed of two ATP-binding proteins (ZnuC), two transmembrane proteins (ZnuB) and a solute-binding protein (ZnuA).

The protein resides in the cell inner membrane. It catalyses the reaction Zn(2+)(out) + ATP(in) + H2O(in) = Zn(2+)(in) + ADP(in) + phosphate(in) + H(+)(in). Its function is as follows. Part of the ABC transporter complex ZnuABC involved in zinc import. Responsible for energy coupling to the transport system. The polypeptide is Zinc import ATP-binding protein ZnuC (Anaplasma marginale (strain St. Maries)).